We begin with the raw amino-acid sequence, 242 residues long: Uridylate kinase (242 aa).

11–14 serves as a coordination point for ATP; it reads KLSG. Positions 19–24 are involved in allosteric activation by GTP; the sequence is GDKGVG. Position 53 (glycine 53) interacts with UMP. ATP is bound by residues glycine 54 and arginine 58. Residues aspartate 73 and 134–141 contribute to the UMP site; that span reads IGSPYFST. 3 residues coordinate ATP: asparagine 162, tyrosine 168, and aspartate 171.

The protein belongs to the UMP kinase family. As to quaternary structure, homohexamer.

It is found in the cytoplasm. The enzyme catalyses UMP + ATP = UDP + ADP. It participates in pyrimidine metabolism; CTP biosynthesis via de novo pathway; UDP from UMP (UMPK route): step 1/1. Its activity is regulated as follows. Allosterically activated by GTP. Inhibited by UTP. Its function is as follows. Catalyzes the reversible phosphorylation of UMP to UDP. The chain is Uridylate kinase from Streptococcus agalactiae serotype Ia (strain ATCC 27591 / A909 / CDC SS700).